A 267-amino-acid chain; its full sequence is MEMO1 family protein aq_890 (267 aa).

Belongs to the MEMO1 family.

The protein is MEMO1 family protein aq_890 of Aquifex aeolicus (strain VF5).